A 215-amino-acid chain; its full sequence is Negative modulator of initiation of replication (215 aa).

Residues 71-93 (AETPKPSSEQEIRTPARKQSTQS) form a disordered region. Residues 181–187 (NTNSGRK) form an interaction with DNA region.

The protein belongs to the SeqA family. Homodimer. Polymerizes to form helical filaments.

It localises to the cytoplasm. Negative regulator of replication initiation, which contributes to regulation of DNA replication and ensures that replication initiation occurs exactly once per chromosome per cell cycle. Binds to pairs of hemimethylated GATC sequences in the oriC region, thus preventing assembly of replication proteins and re-initiation at newly replicated origins. Repression is relieved when the region becomes fully methylated. This is Negative modulator of initiation of replication from Mannheimia succiniciproducens (strain KCTC 0769BP / MBEL55E).